Consider the following 138-residue polypeptide: HTH-type transcriptional regulator CymR (138 aa).

An HTH rrf2-type domain is found at 2–125; the sequence is KISTKGRYGL…DSTTLEDLAS (124 aa). The segment at residues 28–51 is a DNA-binding region (H-T-H motif); the sequence is LKSIAQTNNLSEHYLEQLVSPLRN.

Homodimer. Forms homotetramers at higher concentrations of protein. Forms CymR(2):CysK(2) or CymR(4):CysK(4) complexes in the absence of O-acetylserine.

Its function is as follows. Master repressor of cysteine metabolism in B.subtilis. Controls the expression of genes involved either in cysteine synthesis from sulfide (cysK), sulfonates (ssu), or methionine (mccAB) or in cystine uptake (tcyP). Activity of CymR is positively regulated by CysK in response to cysteine availability. When cysteine is present, the pool of O-acetylserine (OAS) is low, which leads to the formation of a CymR-CysK complex and transcriptional repression of the CymR regulon occurs. In the absence of cysteine, the OAS pool is high and the CymR-CysK complex is mostly dissociated, leading to a faster dissociation of CymR from its DNA targets and the lifting of CymR-dependent repression. This chain is HTH-type transcriptional regulator CymR (cymR), found in Bacillus subtilis (strain 168).